The following is a 446-amino-acid chain: Alpha-galacturonidase (446 aa).

Residue 10 to 72 coordinates NAD(+); the sequence is IKIAYIGGGS…GRWRYEAVST (63 aa). Residue N151 participates in substrate binding. Residue C173 coordinates Mn(2+). H174 (proton donor) is an active-site residue. H210 lines the Mn(2+) pocket.

This sequence belongs to the glycosyl hydrolase 4 family. In terms of assembly, homotetramer. NAD(+) is required as a cofactor. It depends on Mn(2+) as a cofactor.

It carries out the reaction [(1-&gt;4)-alpha-D-galacturonosyl](n) + H2O = alpha-D-galacturonate + [(1-&gt;4)-alpha-D-galacturonosyl](n-1). Functionally, alpha-galacturonidase able to catalyze the hydrolysis of the chromogenic substrate p-nitrophenyl-alpha-D-galacturonic acid (pNPalphaGalUA), and of the probable natural substrate alpha-1,4-di-galacturonate (GalUA(2)). Can neither hydrolyze pNPbetaGalUA, nor the stereoisomeric pNPalphaGlcUA. Does not display alpha- or beta-glucosidase activity as it fails to hydrolyze melibiose, raffinose, lactose and the chromogenic analogs, pNPalphaGal and pNPbetaGal. Cannot use the following compounds as substrates: pNP-N-acetyl-alpha- and beta-D-galactosaminide, pNP-N-acetyl-alpha- and beta-D-glucosaminide, pNP-alpha-L- and beta-L-arabinopyranoside, pNP-alpha- and beta-D-glucuronide, pNP-alpha- and beta-D-glucopyranoside, pNP-alpha- and beta-D-glucopyranoside 6-phosphate, pNP-alpha-D-galactopyranoside 6-phosphate and oNP-beta-D-galactopyranoside 6-phosphate. This is Alpha-galacturonidase (lplD) from Bacillus subtilis (strain 168).